Here is a 341-residue protein sequence, read N- to C-terminus: S-adenosylmethionine:tRNA ribosyltransferase-isomerase (341 aa).

It belongs to the QueA family. In terms of assembly, monomer.

The protein localises to the cytoplasm. The catalysed reaction is 7-aminomethyl-7-carbaguanosine(34) in tRNA + S-adenosyl-L-methionine = epoxyqueuosine(34) in tRNA + adenine + L-methionine + 2 H(+). It functions in the pathway tRNA modification; tRNA-queuosine biosynthesis. Transfers and isomerizes the ribose moiety from AdoMet to the 7-aminomethyl group of 7-deazaguanine (preQ1-tRNA) to give epoxyqueuosine (oQ-tRNA). This is S-adenosylmethionine:tRNA ribosyltransferase-isomerase from Desulforamulus reducens (strain ATCC BAA-1160 / DSM 100696 / MI-1) (Desulfotomaculum reducens).